A 56-amino-acid chain; its full sequence is Large ribosomal subunit protein bL32 (56 aa).

This sequence belongs to the bacterial ribosomal protein bL32 family.

The sequence is that of Large ribosomal subunit protein bL32 from Prochlorococcus marinus (strain MIT 9301).